A 310-amino-acid polypeptide reads, in one-letter code: UDP-N-acetylenolpyruvoylglucosamine reductase (310 aa).

Residues 30–200 (RVGGPAQWLA…VAAEFQLEPG (171 aa)) enclose the FAD-binding PCMH-type domain. Residue R179 is part of the active site. Catalysis depends on S230, which acts as the Proton donor. Residue E300 is part of the active site.

This sequence belongs to the MurB family. It depends on FAD as a cofactor.

Its subcellular location is the cytoplasm. The enzyme catalyses UDP-N-acetyl-alpha-D-muramate + NADP(+) = UDP-N-acetyl-3-O-(1-carboxyvinyl)-alpha-D-glucosamine + NADPH + H(+). It functions in the pathway cell wall biogenesis; peptidoglycan biosynthesis. In terms of biological role, cell wall formation. This chain is UDP-N-acetylenolpyruvoylglucosamine reductase, found in Synechococcus sp. (strain WH7803).